Here is a 995-residue protein sequence, read N- to C-terminus: UPF0182 protein NFA_45260 (995 aa).

The next 7 membrane-spanning stretches (helical) occupy residues 18–38 (VLLV…RFTD), 63–83 (IILF…ALLL), 115–135 (FGIG…QSNW), 176–196 (FVAV…FGGL), 211–231 (IQLA…YWFD), 260–280 (KLIL…GVVL), and 288–308 (MAAA…PLVV). The disordered stretch occupies residues 904–957 (ATPFGGDPATRPQPGTAPPVVDSTQPPADGGTPQPQTTPPPTGSAAKDAAAAEL). Composition is skewed to low complexity over residues 927–938 (TQPPADGGTPQP) and 946–955 (GSAAKDAAAA).

Belongs to the UPF0182 family.

The protein resides in the cell membrane. This chain is UPF0182 protein NFA_45260, found in Nocardia farcinica (strain IFM 10152).